The chain runs to 147 residues: Large ribosomal subunit protein uL15 (147 aa).

Positions 1–62 (MDLSNLRPAI…GQMPLQRRLP (62 aa)) are disordered. 2 stretches are compositionally biased toward gly residues: residues 21 to 31 (RGPGSGNGKTA) and 42 to 52 (SGGGVKPGFEG).

Belongs to the universal ribosomal protein uL15 family. As to quaternary structure, part of the 50S ribosomal subunit.

Its function is as follows. Binds to the 23S rRNA. The sequence is that of Large ribosomal subunit protein uL15 from Syntrophotalea carbinolica (strain DSM 2380 / NBRC 103641 / GraBd1) (Pelobacter carbinolicus).